A 1212-amino-acid polypeptide reads, in one-letter code: Myosin-1 (1212 aa).

A disordered region spans residues 1-35; sequence MGITRRGKDKAAAGQAVAGGASGGRARPKKATFET. The 675-residue stretch at 41–715 folds into the Myosin motor domain; the sequence is VGVSDLTLLS…TLFALEHMRD (675 aa). Residue 134–141 participates in ATP binding; it reads GESGAGKT. Positions 405–487 are actin-binding; the sequence is SVGILDIYGF…PGVFSALKDA (83 aa). IQ domains follow at residues 719–739 and 740–765; these read HNMA…RAES and ATRI…HGHR. A TH1 domain is found at 773 to 962; the sequence is RRRMSILGSR…AVHTQQGEPP (190 aa). Disordered regions lie at residues 947 to 1064 and 1115 to 1212; these read DFYK…APPA and PAAY…DDDW. Polar residues predominate over residues 954–966; it reads VHTQQGEPPNSVS. Low complexity-rich tracts occupy residues 987–998 and 1008–1052; these read RPGGPNGRPARG and PGGA…ASVR. Over residues 1053 to 1062 the composition is skewed to pro residues; that stretch reads APPPPPPAAP. The SH3 domain occupies 1065–1124; it reads KAKIMAKVLYDFAGQKENEMSIKEGDLIEIVQKENNGWWLAKSGNQQAWVPAAYVEEQKQ. Residues 1125–1140 are compositionally biased toward pro residues; sequence APPPVAASRPPPPAPP. The span at 1171–1190 shows a compositional bias: polar residues; sequence MSLNGSDGSRSNTPTPSLGN.

This sequence belongs to the TRAFAC class myosin-kinesin ATPase superfamily. Myosin family.

It is found in the cytoplasm. The protein localises to the cytoskeleton. It localises to the actin patch. Functionally, type-I myosin implicated in the organization of the actin cytoskeleton. Required for proper actin cytoskeleton polarization. At the cell cortex, assembles in patch-like structures together with proteins from the actin-polymerizing machinery and promotes actin assembly. Functions as actin nucleation-promoting factor (NPF) for the Arp2/3 complex. The sequence is that of Myosin-1 (MYO1) from Pyricularia oryzae (strain 70-15 / ATCC MYA-4617 / FGSC 8958) (Rice blast fungus).